Here is a 491-residue protein sequence, read N- to C-terminus: NADH-quinone oxidoreductase subunit N (491 aa).

A run of 14 helical transmembrane segments spans residues 11 to 31, 38 to 58, 74 to 94, 106 to 126, 128 to 148, 163 to 183, 206 to 226, 243 to 263, 272 to 292, 301 to 321, 336 to 356, 379 to 399, 410 to 430, and 465 to 485; these read ATAE…TTFA, LAYG…YNTA, LLGD…LLYG, PEYY…VTSN, LLSM…LVAF, FVLG…LYGA, LLFG…VVPF, LIIA…LLVW, WQTM…LAAI, LAYS…SGVV, MFYA…IILL, FAAM…FIGF, VAAG…IGAF, and LAIA…TFVL.

This sequence belongs to the complex I subunit 2 family. NDH-1 is composed of 14 different subunits. Subunits NuoA, H, J, K, L, M, N constitute the membrane sector of the complex.

Its subcellular location is the cell inner membrane. The enzyme catalyses a quinone + NADH + 5 H(+)(in) = a quinol + NAD(+) + 4 H(+)(out). In terms of biological role, NDH-1 shuttles electrons from NADH, via FMN and iron-sulfur (Fe-S) centers, to quinones in the respiratory chain. The immediate electron acceptor for the enzyme in this species is believed to be ubiquinone. Couples the redox reaction to proton translocation (for every two electrons transferred, four hydrogen ions are translocated across the cytoplasmic membrane), and thus conserves the redox energy in a proton gradient. The chain is NADH-quinone oxidoreductase subunit N from Azoarcus sp. (strain BH72).